Reading from the N-terminus, the 394-residue chain is Upstream-binding factor 1-like protein 1 (394 aa).

The HMG box 1 DNA-binding region spans 101-169; sequence PKRPLTAYLR…DFQKKMRQFK (69 aa). Positions 167–180 are enriched in basic residues; it reads QFKKRHPVSGHPKK. The tract at residues 167 to 197 is disordered; that stretch reads QFKKRHPVSGHPKKSVVPQSHPTKVPTKSQG. Over residues 183-197 the composition is skewed to polar residues; sequence VPQSHPTKVPTKSQG. The HMG box 2 DNA-binding region spans 225–291; it reads RKPPMNAYHK…QYRVKLDLWL (67 aa). Residues 305–394 are disordered; it reads AKATCGKRKN…SDSSSTDEDD (90 aa).

The protein resides in the cytoplasm. The protein localises to the nucleus. In terms of biological role, essential for proliferation of the inner cell mass and trophectodermal cells in peri-implantation development. In Mus musculus (Mouse), this protein is Upstream-binding factor 1-like protein 1.